Consider the following 117-residue polypeptide: Ribonuclease P protein component (117 aa).

This sequence belongs to the RnpA family. Consists of a catalytic RNA component (M1 or rnpB) and a protein subunit.

It carries out the reaction Endonucleolytic cleavage of RNA, removing 5'-extranucleotides from tRNA precursor.. Its function is as follows. RNaseP catalyzes the removal of the 5'-leader sequence from pre-tRNA to produce the mature 5'-terminus. It can also cleave other RNA substrates such as 4.5S RNA. The protein component plays an auxiliary but essential role in vivo by binding to the 5'-leader sequence and broadening the substrate specificity of the ribozyme. The sequence is that of Ribonuclease P protein component from Thermotoga petrophila (strain ATCC BAA-488 / DSM 13995 / JCM 10881 / RKU-1).